Here is a 283-residue protein sequence, read N- to C-terminus: Bis(5'-nucleosyl)-tetraphosphatase, symmetrical (283 aa).

The protein belongs to the Ap4A hydrolase family.

The catalysed reaction is P(1),P(4)-bis(5'-adenosyl) tetraphosphate + H2O = 2 ADP + 2 H(+). Hydrolyzes diadenosine 5',5'''-P1,P4-tetraphosphate to yield ADP. The sequence is that of Bis(5'-nucleosyl)-tetraphosphatase, symmetrical from Pseudomonas aeruginosa (strain LESB58).